A 577-amino-acid polypeptide reads, in one-letter code: Probable cytochrome c biosynthesis protein (577 aa).

The protein belongs to the CcmF/CycK/Ccl1/NrfE/CcsA family.

The protein resides in the mitochondrion. Could be involved in assembly and maturation of cytochromes c. May play a role in guidance of apocytochromes and heme groups for the covalent linkage introduced by the cytochrome-c-heme lyase. The chain is Probable cytochrome c biosynthesis protein from Oenothera berteroana (Bertero's evening primrose).